Reading from the N-terminus, the 331-residue chain is 4-hydroxy-3-methylbut-2-enyl diphosphate reductase (331 aa).

Cys12 is a binding site for [4Fe-4S] cluster. (2E)-4-hydroxy-3-methylbut-2-enyl diphosphate is bound by residues His43 and His81. His43 and His81 together coordinate dimethylallyl diphosphate. The isopentenyl diphosphate site is built by His43 and His81. Cys103 serves as a coordination point for [4Fe-4S] cluster. His131 contacts (2E)-4-hydroxy-3-methylbut-2-enyl diphosphate. His131 provides a ligand contact to dimethylallyl diphosphate. His131 is an isopentenyl diphosphate binding site. The active-site Proton donor is the Glu133. A (2E)-4-hydroxy-3-methylbut-2-enyl diphosphate-binding site is contributed by Thr170. Cys198 lines the [4Fe-4S] cluster pocket. (2E)-4-hydroxy-3-methylbut-2-enyl diphosphate contacts are provided by Ser226, Asn228, and Ser271. The dimethylallyl diphosphate site is built by Ser226, Asn228, and Ser271. Isopentenyl diphosphate contacts are provided by Ser226, Asn228, and Ser271.

This sequence belongs to the IspH family. [4Fe-4S] cluster serves as cofactor.

The catalysed reaction is isopentenyl diphosphate + 2 oxidized [2Fe-2S]-[ferredoxin] + H2O = (2E)-4-hydroxy-3-methylbut-2-enyl diphosphate + 2 reduced [2Fe-2S]-[ferredoxin] + 2 H(+). It carries out the reaction dimethylallyl diphosphate + 2 oxidized [2Fe-2S]-[ferredoxin] + H2O = (2E)-4-hydroxy-3-methylbut-2-enyl diphosphate + 2 reduced [2Fe-2S]-[ferredoxin] + 2 H(+). It functions in the pathway isoprenoid biosynthesis; dimethylallyl diphosphate biosynthesis; dimethylallyl diphosphate from (2E)-4-hydroxy-3-methylbutenyl diphosphate: step 1/1. It participates in isoprenoid biosynthesis; isopentenyl diphosphate biosynthesis via DXP pathway; isopentenyl diphosphate from 1-deoxy-D-xylulose 5-phosphate: step 6/6. Its function is as follows. Catalyzes the conversion of 1-hydroxy-2-methyl-2-(E)-butenyl 4-diphosphate (HMBPP) into a mixture of isopentenyl diphosphate (IPP) and dimethylallyl diphosphate (DMAPP). Acts in the terminal step of the DOXP/MEP pathway for isoprenoid precursor biosynthesis. This Listeria monocytogenes serotype 4b (strain CLIP80459) protein is 4-hydroxy-3-methylbut-2-enyl diphosphate reductase.